A 357-amino-acid chain; its full sequence is MRPARALIDLQALRHNYRLARELTGAKALAVIKADAYGHGAVRCALALEAEADGFAVACIEEALELRAAGIKAPVLLLEGFFEASELALIAEHDLWCVVHSLWQLEAIERTQLHKPLTVWLKLDSGMHRVGLHPKDYHEAYQRLLASGKVARIVLMSHFARADELDADATAQQIAVFEAARQGLAAECSLRNSPGVLGWPQAPSDWVRPGLMLYGATPFEVAQAEAERLQPVMTLQSRVISVRELPAGEPVGYGAKFVSPRPTRVGVVAMGYADGYPRQAPNGTPVLVAGKRTQLIGRVSMDMLSIDLTDVPEATVGSPVELWGKHVLASEVAAHAGTIPYQIFCNLKRVPRDYIGE.

Lysine 33 acts as the Proton acceptor; specific for D-alanine in catalysis. Lysine 33 is modified (N6-(pyridoxal phosphate)lysine). Arginine 129 is a substrate binding site. Tyrosine 253 serves as the catalytic Proton acceptor; specific for L-alanine. A substrate-binding site is contributed by methionine 301.

This sequence belongs to the alanine racemase family. Homodimer. The cofactor is pyridoxal 5'-phosphate.

The catalysed reaction is L-alanine = D-alanine. It functions in the pathway amino-acid biosynthesis; D-alanine biosynthesis; D-alanine from L-alanine: step 1/1. In terms of biological role, catalyzes the interconversion of L-alanine and D-alanine. Is highly specific for alanine as substrate. May serve both anabolic and catabolic purposes. The sequence is that of Alanine racemase from Pseudomonas taetrolens.